The chain runs to 465 residues: Ribulose bisphosphate carboxylase large chain (465 aa).

K4 carries the N6,N6,N6-trimethyllysine modification. Substrate is bound by residues N113 and T163. The active-site Proton acceptor is the K165. K167 serves as a coordination point for substrate. Mg(2+)-binding residues include K191, D193, and E194. At K191 the chain carries N6-carboxylysine. The Proton acceptor role is filled by H284. Residues R285, H317, and S369 each contribute to the substrate site.

This sequence belongs to the RuBisCO large chain family. Type I subfamily. In terms of assembly, heterohexadecamer of 8 large chains and 8 small chains; disulfide-linked. The disulfide link is formed within the large subunit homodimers. Requires Mg(2+) as cofactor. In terms of processing, the disulfide bond which can form in the large chain dimeric partners within the hexadecamer appears to be associated with oxidative stress and protein turnover.

The protein localises to the plastid. The protein resides in the chloroplast. It carries out the reaction 2 (2R)-3-phosphoglycerate + 2 H(+) = D-ribulose 1,5-bisphosphate + CO2 + H2O. The catalysed reaction is D-ribulose 1,5-bisphosphate + O2 = 2-phosphoglycolate + (2R)-3-phosphoglycerate + 2 H(+). Functionally, ruBisCO catalyzes two reactions: the carboxylation of D-ribulose 1,5-bisphosphate, the primary event in carbon dioxide fixation, as well as the oxidative fragmentation of the pentose substrate in the photorespiration process. Both reactions occur simultaneously and in competition at the same active site. The sequence is that of Ribulose bisphosphate carboxylase large chain from Ailanthus altissima (Tree-of-heaven).